A 737-amino-acid chain; its full sequence is Phosphoribosylformylglycinamidine synthase subunit PurL (737 aa).

Histidine 48 is an active-site residue. Positions 51 and 90 each coordinate ATP. Residue glutamate 92 coordinates Mg(2+). Residues 93–96 and arginine 115 each bind substrate; that span reads SHNH. Histidine 94 serves as the catalytic Proton acceptor. Mg(2+) is bound at residue aspartate 116. Glutamine 244 is a substrate binding site. Aspartate 272 contacts Mg(2+). Position 316–318 (316–318) interacts with substrate; sequence ESQ. 2 residues coordinate ATP: aspartate 500 and glycine 537. Asparagine 538 contributes to the Mg(2+) binding site. Residue serine 540 participates in substrate binding.

This sequence belongs to the FGAMS family. As to quaternary structure, monomer. Part of the FGAM synthase complex composed of 1 PurL, 1 PurQ and 2 PurS subunits.

Its subcellular location is the cytoplasm. The enzyme catalyses N(2)-formyl-N(1)-(5-phospho-beta-D-ribosyl)glycinamide + L-glutamine + ATP + H2O = 2-formamido-N(1)-(5-O-phospho-beta-D-ribosyl)acetamidine + L-glutamate + ADP + phosphate + H(+). It participates in purine metabolism; IMP biosynthesis via de novo pathway; 5-amino-1-(5-phospho-D-ribosyl)imidazole from N(2)-formyl-N(1)-(5-phospho-D-ribosyl)glycinamide: step 1/2. Its function is as follows. Part of the phosphoribosylformylglycinamidine synthase complex involved in the purines biosynthetic pathway. Catalyzes the ATP-dependent conversion of formylglycinamide ribonucleotide (FGAR) and glutamine to yield formylglycinamidine ribonucleotide (FGAM) and glutamate. The FGAM synthase complex is composed of three subunits. PurQ produces an ammonia molecule by converting glutamine to glutamate. PurL transfers the ammonia molecule to FGAR to form FGAM in an ATP-dependent manner. PurS interacts with PurQ and PurL and is thought to assist in the transfer of the ammonia molecule from PurQ to PurL. This is Phosphoribosylformylglycinamidine synthase subunit PurL from Sulfurimonas denitrificans (strain ATCC 33889 / DSM 1251) (Thiomicrospira denitrificans (strain ATCC 33889 / DSM 1251)).